A 317-amino-acid polypeptide reads, in one-letter code: Pseudouridine-5'-phosphate glycosidase (317 aa).

The active-site Proton donor is glutamate 27. The substrate site is built by lysine 89 and valine 109. Aspartate 141 contacts Mn(2+). 143 to 145 contacts substrate; it reads SAD. Lysine 162 (nucleophile) is an active-site residue.

This sequence belongs to the pseudouridine-5'-phosphate glycosidase family. As to quaternary structure, homotrimer. The cofactor is Mn(2+).

The catalysed reaction is D-ribose 5-phosphate + uracil = psi-UMP + H2O. Functionally, catalyzes the reversible cleavage of pseudouridine 5'-phosphate (PsiMP) to ribose 5-phosphate and uracil. Functions biologically in the cleavage direction, as part of a pseudouridine degradation pathway. The polypeptide is Pseudouridine-5'-phosphate glycosidase (Sorangium cellulosum (strain So ce56) (Polyangium cellulosum (strain So ce56))).